Consider the following 487-residue polypeptide: N-succinylglutamate 5-semialdehyde dehydrogenase (487 aa).

221–226 (GSSRTG) is an NAD(+) binding site. Residues Glu-244 and Cys-278 contribute to the active site.

This sequence belongs to the aldehyde dehydrogenase family. AstD subfamily.

It carries out the reaction N-succinyl-L-glutamate 5-semialdehyde + NAD(+) + H2O = N-succinyl-L-glutamate + NADH + 2 H(+). It functions in the pathway amino-acid degradation; L-arginine degradation via AST pathway; L-glutamate and succinate from L-arginine: step 4/5. Its function is as follows. Catalyzes the NAD-dependent reduction of succinylglutamate semialdehyde into succinylglutamate. This Pseudomonas putida (strain ATCC 47054 / DSM 6125 / CFBP 8728 / NCIMB 11950 / KT2440) protein is N-succinylglutamate 5-semialdehyde dehydrogenase.